A 295-amino-acid polypeptide reads, in one-letter code: MSANEIPDELWRKILEIGVKSSTFSYKDLCCISISSRRLFRLSCDDSLWDLLLVHDFPNHIVSASSSSESPTKFIYMTRFEREKERKLAAHRRALLRKESEISEWGRRIRELEARLSDEAERLQSSSLQFSDLLKVRQASVALNVWQPEVVRGRQKQMVEQNAVPVEGRLRALEMEMKLCKQQIMGLNRALREVKHRYDIAIKELESMKYHPLRDYKSIRNGDQGSNGKTKKLKTSINYSGDQVSNGKRRKLKTSIDCKFMNISHFSSCSSVTEKFYSYSPKIIHEYIPENLLVL.

The F-box; degenerate domain occupies 19–66 (VKSSTFSYKDLCCISISSRRLFRLSCDDSLWDLLLVHDFPNHIVSASS). Coiled coils occupy residues 82 to 129 (REKE…SSLQ) and 167 to 209 (EGRL…ESMK). The interval 217-245 (KSIRNGDQGSNGKTKKLKTSINYSGDQVS) is disordered. Residues 235–245 (TSINYSGDQVS) show a composition bias toward polar residues.

As to quaternary structure, part of a SCF (ASK-cullin-F-box) protein ligase complex. Interacts with SKP1A/ASK1 and SPK1B/ASK2.

Its pathway is protein modification; protein ubiquitination. Component of SCF(ASK-cullin-F-box) E3 ubiquitin ligase complexes, which may mediate the ubiquitination and subsequent proteasomal degradation of target proteins. The chain is F-box protein SKIP24 (SKIP24) from Arabidopsis thaliana (Mouse-ear cress).